Consider the following 152-residue polypeptide: Transcriptional regulator MraZ (152 aa).

SpoVT-AbrB domains lie at 5-52 (ASAI…PADE) and 81-124 (AHEI…DEAQ).

It belongs to the MraZ family. In terms of assembly, forms oligomers.

Its subcellular location is the cytoplasm. It is found in the nucleoid. This chain is Transcriptional regulator MraZ, found in Shewanella amazonensis (strain ATCC BAA-1098 / SB2B).